We begin with the raw amino-acid sequence, 299 residues long: Acetylglutamate kinase (299 aa).

Residues 70–71, arginine 92, and asparagine 186 each bind substrate; that span reads GG.

This sequence belongs to the acetylglutamate kinase family. ArgB subfamily.

The protein resides in the cytoplasm. The enzyme catalyses N-acetyl-L-glutamate + ATP = N-acetyl-L-glutamyl 5-phosphate + ADP. It functions in the pathway amino-acid biosynthesis; L-arginine biosynthesis; N(2)-acetyl-L-ornithine from L-glutamate: step 2/4. Its function is as follows. Catalyzes the ATP-dependent phosphorylation of N-acetyl-L-glutamate. This chain is Acetylglutamate kinase, found in Thermoanaerobacter sp. (strain X514).